A 280-amino-acid chain; its full sequence is Myelin proteolipid protein B (280 aa).

The Cytoplasmic portion of the chain corresponds to methionine 1–cysteine 10. S-palmitoyl cysteine attachment occurs at residues cysteine 7 and cysteine 10. Residues methionine 11–glycine 36 traverse the membrane as a helical segment. The Extracellular segment spans residues histidine 37–glutamate 59. Residues tyrosine 60 to alanine 88 traverse the membrane as a helical segment. Over glutamate 89–lysine 152 the chain is Cytoplasmic. 2 S-palmitoyl cysteine lipidation sites follow: cysteine 140 and cysteine 142. Residues phenylalanine 153–phenylalanine 179 traverse the membrane as a helical segment. The Extracellular segment spans residues asparagine 180–histidine 239. 2 cysteine pairs are disulfide-bonded: cysteine 185/cysteine 229 and cysteine 202/cysteine 221. A helical transmembrane segment spans residues leucine 240 to leucine 269. At arginine 270–phenylalanine 280 the chain is on the cytoplasmic side.

It belongs to the myelin proteolipid protein family.

It is found in the cell membrane. Functionally, this is the major myelin protein from the central nervous system. It plays an important role in the formation or maintenance of the multilamellar structure of myelin. This Xenopus laevis (African clawed frog) protein is Myelin proteolipid protein B (plp1-b).